Reading from the N-terminus, the 178-residue chain is MINRKILLTSLLLIFTVLSACSREKNTCRVVKISDGDTLTCLTKGNKSIKVRLAEIDAPEKSQAFGQKSKKTLSDLVYQKNVRLARKGKDRYQRTLAVVYYQKQNINLEMVKQGMAWAYKQYSHDPIYLQAQENAQAKGIGLWADNNPIEPSQWRRQEKINMAFDYQTFPSSISLFPT.

Positions 1–19 are cleaved as a signal peptide; that stretch reads MINRKILLTSLLLIFTVLS. Active-site residues include Arg52, Glu60, and Arg94.

Belongs to the thermonuclease family.

This is an uncharacterized protein from Haemophilus influenzae (strain ATCC 51907 / DSM 11121 / KW20 / Rd).